We begin with the raw amino-acid sequence, 708 residues long: Kin of IRRE-like protein 2 (708 aa).

The first 20 residues, 1 to 20 (MLRMRVPALLVLLFCFRGRA), serve as a signal peptide directing secretion. Over 21-510 (GPSPHFLQQP…GRRDLLPTVR (490 aa)) the chain is Extracellular. Ig-like C2-type domains lie at 24-118 (PHFL…AQLH), 123-222 (PEAP…ITLS), 227-307 (PEVT…TALD), 312-394 (PILQ…ARLT), and 398-501 (PPVV…ASLG). A disulfide bond links cysteine 45 and cysteine 103. Residue asparagine 143 is glycosylated (N-linked (GlcNAc...) asparagine). Intrachain disulfides connect cysteine 146–cysteine 204 and cysteine 248–cysteine 291. A Cell attachment site motif is present at residues 149-151 (RGD). Residue asparagine 301 is glycosylated (N-linked (GlcNAc...) asparagine). Cystine bridges form between cysteine 333-cysteine 375 and cysteine 419-cysteine 485. Asparagine 484 carries an N-linked (GlcNAc...) asparagine glycan. A helical transmembrane segment spans residues 511 to 531 (IVAGVAAATTTLLMVITGVAL). Over 532 to 708 (CCWRHSKASA…PSHPRLQTHV (177 aa)) the chain is Cytoplasmic. The segment at 545–601 (EQKNLMRIPGSSDGSSSRGPEEEETGSREDRGPIVHTDHSDLVLEEEGTLETKDPTN) is disordered. Residues 553-562 (PGSSDGSSSR) show a composition bias toward low complexity. Residues 569 to 586 (TGSREDRGPIVHTDHSDL) are compositionally biased toward basic and acidic residues. Phosphoserine is present on serine 571. Tyrosine 603, tyrosine 604, and tyrosine 661 each carry phosphotyrosine. The disordered stretch occupies residues 684–708 (LAPGTPPFPYAAFPTPSHPRLQTHV).

The protein belongs to the immunoglobulin superfamily. As to quaternary structure, homodimer. Interacts with NPHS2/podocin (via the C-terminus). Interacts with NPHS1 (via the Ig-like domains). Interacts with FYN. In terms of processing, N-glycosylated. The extracellular domain is cleaved leading to the generation of a soluble fragment and a membrane-bound C-terminal fragment, which is further cleaved by gamma-secretase. In terms of tissue distribution, highly expressed in beta-cells of the pancreatic islets.

Its subcellular location is the cell membrane. Its function is as follows. May regulate basal insulin secretion. This chain is Kin of IRRE-like protein 2 (KIRREL2), found in Homo sapiens (Human).